Consider the following 689-residue polypeptide: Glycine--tRNA ligase beta subunit (689 aa).

The protein belongs to the class-II aminoacyl-tRNA synthetase family. As to quaternary structure, tetramer of two alpha and two beta subunits.

The protein resides in the cytoplasm. The enzyme catalyses tRNA(Gly) + glycine + ATP = glycyl-tRNA(Gly) + AMP + diphosphate. The polypeptide is Glycine--tRNA ligase beta subunit (Salmonella agona (strain SL483)).